Here is a 406-residue protein sequence, read N- to C-terminus: 2,3-bisphosphoglycerate-independent phosphoglycerate mutase (406 aa).

This sequence belongs to the BPG-independent phosphoglycerate mutase family. A-PGAM subfamily.

The catalysed reaction is (2R)-2-phosphoglycerate = (2R)-3-phosphoglycerate. Its pathway is carbohydrate degradation; glycolysis; pyruvate from D-glyceraldehyde 3-phosphate: step 3/5. Catalyzes the interconversion of 2-phosphoglycerate and 3-phosphoglycerate. The chain is 2,3-bisphosphoglycerate-independent phosphoglycerate mutase from Methanococcus maripaludis (strain C7 / ATCC BAA-1331).